Here is a 399-residue protein sequence, read N- to C-terminus: Fluconazole resistance protein 3 (399 aa).

Disordered regions lie at residues Met-1–Phe-21 and His-103–Ala-197. Polar residues predominate over residues His-103–Gly-145. Residues Ser-167–Ser-184 show a composition bias toward low complexity. One can recognise a bZIP domain in the interval Glu-210 to Leu-273. Residues Lys-215–Lys-234 are basic motif. A leucine-zipper region spans residues Leu-235 to Leu-242.

Belongs to the bZIP family.

Its subcellular location is the nucleus. Its function is as follows. Transcription factor that confers fluconazole resistance in S.cerevisiae by activation of the PDR5 gene. Can also activate the transcription of S.cerevisiae genes involved in 4-nitroquinoline-N-oxide resistance. The sequence is that of Fluconazole resistance protein 3 (FCR3) from Candida albicans (Yeast).